The chain runs to 467 residues: DNA polymerase IV (467 aa).

One can recognise a UmuC domain in the interval 5–187 (VLHIDMDAFF…LPVGALWGVG (183 aa)). Residues aspartate 9 and aspartate 104 each contribute to the Mg(2+) site. Residue glutamate 105 is part of the active site. Disordered regions lie at residues 364 to 383 (PDTDYEVGVQSSSSSESTQV) and 429 to 449 (KGRTKSFSMDDPDLTPADPLD).

The protein belongs to the DNA polymerase type-Y family. As to quaternary structure, monomer. The cofactor is Mg(2+).

The protein resides in the cytoplasm. It carries out the reaction DNA(n) + a 2'-deoxyribonucleoside 5'-triphosphate = DNA(n+1) + diphosphate. Poorly processive, error-prone DNA polymerase involved in untargeted mutagenesis. Copies undamaged DNA at stalled replication forks, which arise in vivo from mismatched or misaligned primer ends. These misaligned primers can be extended by PolIV. Exhibits no 3'-5' exonuclease (proofreading) activity. May be involved in translesional synthesis, in conjunction with the beta clamp from PolIII. This chain is DNA polymerase IV, found in Corynebacterium glutamicum (strain ATCC 13032 / DSM 20300 / JCM 1318 / BCRC 11384 / CCUG 27702 / LMG 3730 / NBRC 12168 / NCIMB 10025 / NRRL B-2784 / 534).